Here is an 807-residue protein sequence, read N- to C-terminus: Sucrose synthase 2 (807 aa).

The interval 274–752 is GT-B glycosyltransferase; sequence MVFNVVILSP…GLKRIYERYT (479 aa).

Belongs to the glycosyltransferase 1 family. Plant sucrose synthase subfamily. Detected in the whole plant but at lower levels. Predominantly expressed in developing siliques. Also detected in the root tip. Detected in the embryo, endosperm and seed coat (at the protein level).

Its subcellular location is the cytoplasm. The protein resides in the plastid membrane. It catalyses the reaction an NDP-alpha-D-glucose + D-fructose = a ribonucleoside 5'-diphosphate + sucrose + H(+). Its function is as follows. Sucrose-cleaving enzyme that provides UDP-glucose and fructose for various metabolic pathways. Modulates metabolic homeostasis and directs carbon towards starch synthesis in developing seeds. The protein is Sucrose synthase 2 (SUS2) of Arabidopsis thaliana (Mouse-ear cress).